A 23-amino-acid chain; its full sequence is Paralytic peptide 1 (23 aa).

Cys-7 and Cys-19 form a disulfide bridge.

This sequence belongs to the GBP/PSP1/paralytic peptide family. As to expression, hemolymph.

Functionally, causes rapid, rigid paralysis when injected into Lepidopteran larvae. The physiological role may be to reduce hemolymph loss following injury and promote wound healing. The chain is Paralytic peptide 1 from Spodoptera exigua (Beet armyworm).